Consider the following 281-residue polypeptide: Acetyl-coenzyme A carboxylase carboxyl transferase subunit beta (281 aa).

One can recognise a CoA carboxyltransferase N-terminal domain in the interval I23–N281. Zn(2+)-binding residues include C27, C30, C46, and C49. The C4-type zinc finger occupies C27–C49.

The protein belongs to the AccD/PCCB family. In terms of assembly, acetyl-CoA carboxylase is a heterohexamer composed of biotin carboxyl carrier protein (AccB), biotin carboxylase (AccC) and two subunits each of ACCase subunit alpha (AccA) and ACCase subunit beta (AccD). It depends on Zn(2+) as a cofactor.

The protein resides in the cytoplasm. It catalyses the reaction N(6)-carboxybiotinyl-L-lysyl-[protein] + acetyl-CoA = N(6)-biotinyl-L-lysyl-[protein] + malonyl-CoA. Its pathway is lipid metabolism; malonyl-CoA biosynthesis; malonyl-CoA from acetyl-CoA: step 1/1. In terms of biological role, component of the acetyl coenzyme A carboxylase (ACC) complex. Biotin carboxylase (BC) catalyzes the carboxylation of biotin on its carrier protein (BCCP) and then the CO(2) group is transferred by the transcarboxylase to acetyl-CoA to form malonyl-CoA. The protein is Acetyl-coenzyme A carboxylase carboxyl transferase subunit beta of Alteromonas mediterranea (strain DSM 17117 / CIP 110805 / LMG 28347 / Deep ecotype).